The chain runs to 934 residues: 2-oxoglutarate dehydrogenase E1 component (934 aa).

The protein belongs to the alpha-ketoglutarate dehydrogenase family. As to quaternary structure, homodimer. Part of the 2-oxoglutarate dehydrogenase (OGDH) complex composed of E1 (2-oxoglutarate dehydrogenase), E2 (dihydrolipoamide succinyltransferase) and E3 (dihydrolipoamide dehydrogenase); the complex contains multiple copies of the three enzymatic components (E1, E2 and E3). Requires thiamine diphosphate as cofactor.

The catalysed reaction is N(6)-[(R)-lipoyl]-L-lysyl-[protein] + 2-oxoglutarate + H(+) = N(6)-[(R)-S(8)-succinyldihydrolipoyl]-L-lysyl-[protein] + CO2. In terms of biological role, E1 component of the 2-oxoglutarate dehydrogenase (OGDH) complex which catalyzes the decarboxylation of 2-oxoglutarate, the first step in the conversion of 2-oxoglutarate to succinyl-CoA and CO(2). The polypeptide is 2-oxoglutarate dehydrogenase E1 component (Staphylococcus epidermidis (strain ATCC 35984 / DSM 28319 / BCRC 17069 / CCUG 31568 / BM 3577 / RP62A)).